Reading from the N-terminus, the 608-residue chain is Probable cytosolic Fe-S cluster assembly factor SPAC806.02c (608 aa).

Residue 13 to 20 (GKGGVGKS) coordinates ATP. Cys-201 and Cys-204 together coordinate [4Fe-4S] cluster. 7 WD repeats span residues 288–327 (GHTG…LVHV), 331–371 (FHTR…WECT), 376–415 (GHEN…EFDC), 421–460 (EHTQ…WALT), 465–504 (GHTN…EDVA), 529–567 (IHKG…EALW), and 576–608 (AHGV…WSFK).

This sequence in the N-terminal section; belongs to the Mrp/NBP35 ATP-binding proteins family. NUBP2/CFD1 subfamily. It in the C-terminal section; belongs to the WD repeat CIA1 family. As to quaternary structure, heterotetramer of 2 nbp35 and 2 SPAC806.02c chains. Requires [4Fe-4S] cluster as cofactor.

It is found in the cytoplasm. Its subcellular location is the nucleus. In terms of biological role, fusion protein of two essential components of the cytosolic iron-sulfur (Fe/S) protein assembly (CIA) machinery. Required for maturation of extramitochondrial Fe-S proteins. May form a heterotetramer with nubp35, functioning as a Fe-S scaffold complex, mediating the de novo assembly of an Fe-S cluster and its transfer to target apoproteins. The polypeptide is Probable cytosolic Fe-S cluster assembly factor SPAC806.02c (Schizosaccharomyces pombe (strain 972 / ATCC 24843) (Fission yeast)).